The sequence spans 84 residues: Acyl carrier protein (84 aa).

Residues 1–75 form the Carrier domain; that stretch reads MIFQKIQEFI…DILEYIQQHV (75 aa). At S35 the chain carries O-(pantetheine 4'-phosphoryl)serine.

It belongs to the acyl carrier protein (ACP) family. In terms of processing, 4'-phosphopantetheine is transferred from CoA to a specific serine of apo-ACP by AcpS. This modification is essential for activity because fatty acids are bound in thioester linkage to the sulfhydryl of the prosthetic group.

Its subcellular location is the cytoplasm. It participates in lipid metabolism; fatty acid biosynthesis. Its function is as follows. Carrier of the growing fatty acid chain in fatty acid biosynthesis. The chain is Acyl carrier protein from Phytoplasma mali (strain AT).